The sequence spans 246 residues: Small ribosomal subunit protein uS2 (246 aa).

Belongs to the universal ribosomal protein uS2 family.

This is Small ribosomal subunit protein uS2 from Lachnoclostridium phytofermentans (strain ATCC 700394 / DSM 18823 / ISDg) (Clostridium phytofermentans).